We begin with the raw amino-acid sequence, 377 residues long: SH2/SH3 adapter protein Nck1 (377 aa).

A2 is modified (N-acetylalanine). The SH3 1 domain occupies 2–61; it reads AEEVVVVAKFDYVAQQEQELDIKKNERLWLLDDSKSWWRVRNSMNKTGFVPSNYVERKNS. Residues S85, S91, and S96 each carry the phosphoserine modification. Phosphotyrosine is present on Y105. An SH3 2 domain is found at 106–165; it reads DLNMPAFVKFNYMAEREDELSLIKGTKVIVMEKCSDGWWRGSYNGQIGWFPSNYVTEEGD. S166 carries the phosphoserine modification. The SH3 3 domain occupies 190 to 252; it reads QVLHVVQALY…PKNYVTIMQN (63 aa). Residues 282 to 376 form the SH2 domain; it reads WYYGKVTRHQ…GEKLYLVKHL (95 aa).

Interacts (via SH2 domain and SH3 domain 2) with EGFR. Interacts with PAK1 and SOS1. Interacts (via SH3 domains) with PKN2. Associates with BLNK, PLCG1, VAV1 and NCK1 in a B-cell antigen receptor-dependent fashion. Interacts with SOCS7. This interaction is required for nuclear import. Part of a complex containing PPP1R15B, PP1 and NCK1. Interacts with RALGPS1. Interacts with CAV2 (tyrosine phosphorylated form). Interacts with ADAM15. Interacts with FASLG. Directly interacts with RASA1. Interacts with isoform 4 of MINK1. Interacts with FLT1 (tyrosine phosphorylated). Interacts with KDR (tyrosine phosphorylated). Interacts (via SH2 domain) with EPHB1; activates the JUN cascade to regulate cell adhesion. Interacts with EPHA2. Interacts (via SH2 domain) with PDGFRB (tyrosine phosphorylated). Interacts with the inactive form of EIF2AK2/PKR. Interacts with PTPN1. Interacts with INSR/insulin receptor (in response to insulin stimulation); this interaction may mediate PTPN1 recruitment leading to INSR dephosphorylation. Interacts with CD3E (via Proline-rich sequence); the interaction is ligand dependent but independent of tyrosine kinase activation. Interacts with EGFR. Interacts with IRS1. Phosphorylated on Ser and Tyr residues. Phosphorylated in response to activation of EGFR and FcERI. Phosphorylated by activated PDGFRB.

It is found in the cytoplasm. It localises to the endoplasmic reticulum. The protein localises to the nucleus. Its function is as follows. Adapter protein which associates with tyrosine-phosphorylated growth factor receptors, such as KDR and PDGFRB, or their cellular substrates. Maintains low levels of EIF2S1 phosphorylation by promoting its dephosphorylation by PP1. Plays a role in the DNA damage response, not in the detection of the damage by ATM/ATR, but for efficient activation of downstream effectors, such as that of CHEK2. Plays a role in ELK1-dependent transcriptional activation in response to activated Ras signaling. Modulates the activation of EIF2AK2/PKR by dsRNA. May play a role in cell adhesion and migration through interaction with ephrin receptors. Also acts as an adpater protein for the T cell receptor complex (TCR-CD3E). Upon ligand engagement, is recruited by CD3E and promotes maturation of the immune synapse and T cell activation. The protein is SH2/SH3 adapter protein Nck1 (Nck1) of Mus musculus (Mouse).